A 339-amino-acid chain; its full sequence is N-acetyl-gamma-glutamyl-phosphate reductase (339 aa).

The active site involves Cys-145.

This sequence belongs to the NAGSA dehydrogenase family. Type 1 subfamily.

It is found in the cytoplasm. It catalyses the reaction N-acetyl-L-glutamate 5-semialdehyde + phosphate + NADP(+) = N-acetyl-L-glutamyl 5-phosphate + NADPH + H(+). It functions in the pathway amino-acid biosynthesis; L-arginine biosynthesis; N(2)-acetyl-L-ornithine from L-glutamate: step 3/4. In terms of biological role, catalyzes the NADPH-dependent reduction of N-acetyl-5-glutamyl phosphate to yield N-acetyl-L-glutamate 5-semialdehyde. The chain is N-acetyl-gamma-glutamyl-phosphate reductase from Thermotoga sp. (strain RQ2).